Here is a 391-residue protein sequence, read N- to C-terminus: NAD(P)H-quinone oxidoreductase subunit H, chloroplastic (391 aa).

This sequence belongs to the complex I 49 kDa subunit family. In terms of assembly, NDH is composed of at least 16 different subunits, 5 of which are encoded in the nucleus.

It localises to the plastid. The protein resides in the chloroplast thylakoid membrane. It catalyses the reaction a plastoquinone + NADH + (n+1) H(+)(in) = a plastoquinol + NAD(+) + n H(+)(out). The enzyme catalyses a plastoquinone + NADPH + (n+1) H(+)(in) = a plastoquinol + NADP(+) + n H(+)(out). Its function is as follows. NDH shuttles electrons from NAD(P)H:plastoquinone, via FMN and iron-sulfur (Fe-S) centers, to quinones in the photosynthetic chain and possibly in a chloroplast respiratory chain. The immediate electron acceptor for the enzyme in this species is believed to be plastoquinone. Couples the redox reaction to proton translocation, and thus conserves the redox energy in a proton gradient. The protein is NAD(P)H-quinone oxidoreductase subunit H, chloroplastic of Mesostigma viride (Green alga).